Reading from the N-terminus, the 213-residue chain is Imidazole glycerol phosphate synthase subunit HisH (213 aa).

A Glutamine amidotransferase type-1 domain is found at 4–213 (SIAIVDYGMG…LYRNFVHWKP (210 aa)). The active-site Nucleophile is the cysteine 83. Catalysis depends on residues histidine 193 and glutamate 195.

As to quaternary structure, heterodimer of HisH and HisF.

Its subcellular location is the cytoplasm. It carries out the reaction 5-[(5-phospho-1-deoxy-D-ribulos-1-ylimino)methylamino]-1-(5-phospho-beta-D-ribosyl)imidazole-4-carboxamide + L-glutamine = D-erythro-1-(imidazol-4-yl)glycerol 3-phosphate + 5-amino-1-(5-phospho-beta-D-ribosyl)imidazole-4-carboxamide + L-glutamate + H(+). It catalyses the reaction L-glutamine + H2O = L-glutamate + NH4(+). It participates in amino-acid biosynthesis; L-histidine biosynthesis; L-histidine from 5-phospho-alpha-D-ribose 1-diphosphate: step 5/9. Its function is as follows. IGPS catalyzes the conversion of PRFAR and glutamine to IGP, AICAR and glutamate. The HisH subunit catalyzes the hydrolysis of glutamine to glutamate and ammonia as part of the synthesis of IGP and AICAR. The resulting ammonia molecule is channeled to the active site of HisF. The chain is Imidazole glycerol phosphate synthase subunit HisH from Burkholderia multivorans (strain ATCC 17616 / 249).